The sequence spans 190 residues: Adenylate kinase (190 aa).

11–16 (GAGKGT) lines the ATP pocket. The NMP stretch occupies residues 31-60 (STGDIFRFNIKNETELGKLAKTFMDKGDLV). AMP contacts are provided by residues Thr-32, Arg-37, 58–60 (DLV), 86–89 (GFPR), and Gln-93. The interval 127 to 137 (ERGKTSGRVDD) is LID. Position 128 (Arg-128) interacts with ATP. AMP contacts are provided by Arg-134 and Arg-146. Gly-174 provides a ligand contact to ATP.

The protein belongs to the adenylate kinase family. In terms of assembly, monomer.

It localises to the cytoplasm. It catalyses the reaction AMP + ATP = 2 ADP. The protein operates within purine metabolism; AMP biosynthesis via salvage pathway; AMP from ADP: step 1/1. Catalyzes the reversible transfer of the terminal phosphate group between ATP and AMP. Plays an important role in cellular energy homeostasis and in adenine nucleotide metabolism. In Flavobacterium psychrophilum (strain ATCC 49511 / DSM 21280 / CIP 103535 / JIP02/86), this protein is Adenylate kinase.